Consider the following 936-residue polypeptide: Pre-rRNA-processing protein FHL1 (936 aa).

2 disordered regions span residues 1 to 90 (MDGE…NGNL) and 139 to 169 (DHSR…QDNT). Residues 9–29 (ESSNHVGTSSPTTETQFTIDS) are compositionally biased toward polar residues. Ser-44 carries the post-translational modification Phosphoserine. The segment covering 139–150 (DHSREVSSKEDI) has biased composition (basic and acidic residues). Phosphoserine is present on Ser-228. A phosphothreonine mark is found at Thr-230 and Thr-247. Residues 243–257 (PPQNTVTENNSTDAE) are compositionally biased toward polar residues. The disordered stretch occupies residues 243–270 (PPQNTVTENNSTDAETTQRKLSEPIDAS). Ser-264 carries the post-translational modification Phosphoserine. An FHA domain is found at 300–357 (AIIGRRSENDFSHKVDVNLGPSKSISRRHAQIFYNFGTGRFELSIIGKNGAFVDDIFV). The segment covering 384–395 (EQERNDDSKSPE) has biased composition (basic and acidic residues). The tract at residues 384-442 (EQERNDDSKSPENADIAESEINTRNLKKNEPKSKKKITTGAKPKKAQTKPAVKKEKKPP) is disordered. The segment covering 416 to 430 (SKKKITTGAKPKKAQ) has biased composition (basic residues). The segment at residues 460-552 (TKPTVSYSAM…ERQKKKQSEI (93 aa)) is a DNA-binding region (fork-head). A disordered region spans residues 718-936 (AKAQHSKPIR…EVNVSLEEKL (219 aa)). 2 stretches are compositionally biased toward polar residues: residues 742-753 (SQLSASASSHPN) and 765-777 (DPSS…QPRQ). 2 stretches are compositionally biased toward low complexity: residues 779–795 (ARAT…AAAS) and 815–853 (ESGT…TSSE). Acidic residues predominate over residues 854–863 (SESESDSGSE). A compositionally biased stretch (basic and acidic residues) spans 864–911 (VDEKNNKNEKIDSESIKNNESKDDIPSKDENSSNDNREISKTDEEGHD).

The protein localises to the nucleus. In terms of biological role, acts as a transcriptional regulator that recruits coactivator IFH1 to the promoters of ribosomal protein genes. Recruited to ribosomal gene promoters by RAP1. The protein is Pre-rRNA-processing protein FHL1 (FHL1) of Saccharomyces cerevisiae (strain ATCC 204508 / S288c) (Baker's yeast).